The sequence spans 406 residues: Phosphopentomutase (406 aa).

The Mn(2+) site is built by aspartate 10, aspartate 305, histidine 310, aspartate 346, histidine 347, and histidine 358.

This sequence belongs to the phosphopentomutase family. Mn(2+) is required as a cofactor.

Its subcellular location is the cytoplasm. The enzyme catalyses 2-deoxy-alpha-D-ribose 1-phosphate = 2-deoxy-D-ribose 5-phosphate. The catalysed reaction is alpha-D-ribose 1-phosphate = D-ribose 5-phosphate. It participates in carbohydrate degradation; 2-deoxy-D-ribose 1-phosphate degradation; D-glyceraldehyde 3-phosphate and acetaldehyde from 2-deoxy-alpha-D-ribose 1-phosphate: step 1/2. Isomerase that catalyzes the conversion of deoxy-ribose 1-phosphate (dRib-1-P) and ribose 1-phosphate (Rib-1-P) to deoxy-ribose 5-phosphate (dRib-5-P) and ribose 5-phosphate (Rib-5-P), respectively. In Allorhizobium ampelinum (strain ATCC BAA-846 / DSM 112012 / S4) (Agrobacterium vitis (strain S4)), this protein is Phosphopentomutase.